Here is a 384-residue protein sequence, read N- to C-terminus: 1-deoxy-D-xylulose 5-phosphate reductoisomerase (384 aa).

Positions 10, 11, 12, 13, 37, 38, and 124 each coordinate NADPH. Position 125 (lysine 125) interacts with 1-deoxy-D-xylulose 5-phosphate. Glutamate 126 contacts NADPH. Position 150 (aspartate 150) interacts with Mn(2+). 1-deoxy-D-xylulose 5-phosphate contacts are provided by serine 151, glutamate 152, serine 176, and histidine 199. Glutamate 152 is a Mn(2+) binding site. NADPH is bound at residue glycine 205. Positions 212, 217, 218, and 221 each coordinate 1-deoxy-D-xylulose 5-phosphate. Residue glutamate 221 participates in Mn(2+) binding.

The protein belongs to the DXR family. Mg(2+) is required as a cofactor. The cofactor is Mn(2+).

It carries out the reaction 2-C-methyl-D-erythritol 4-phosphate + NADP(+) = 1-deoxy-D-xylulose 5-phosphate + NADPH + H(+). It functions in the pathway isoprenoid biosynthesis; isopentenyl diphosphate biosynthesis via DXP pathway; isopentenyl diphosphate from 1-deoxy-D-xylulose 5-phosphate: step 1/6. Catalyzes the NADPH-dependent rearrangement and reduction of 1-deoxy-D-xylulose-5-phosphate (DXP) to 2-C-methyl-D-erythritol 4-phosphate (MEP). This Clostridium perfringens (strain ATCC 13124 / DSM 756 / JCM 1290 / NCIMB 6125 / NCTC 8237 / Type A) protein is 1-deoxy-D-xylulose 5-phosphate reductoisomerase.